We begin with the raw amino-acid sequence, 141 residues long: Nucleoside diphosphate kinase (141 aa).

ATP is bound by residues Lys11, Phe59, Arg87, Thr93, Arg104, and Asn114. His117 (pros-phosphohistidine intermediate) is an active-site residue.

It belongs to the NDK family. As to quaternary structure, homotetramer. Requires Mg(2+) as cofactor.

The protein resides in the cytoplasm. The enzyme catalyses a 2'-deoxyribonucleoside 5'-diphosphate + ATP = a 2'-deoxyribonucleoside 5'-triphosphate + ADP. The catalysed reaction is a ribonucleoside 5'-diphosphate + ATP = a ribonucleoside 5'-triphosphate + ADP. Major role in the synthesis of nucleoside triphosphates other than ATP. The ATP gamma phosphate is transferred to the NDP beta phosphate via a ping-pong mechanism, using a phosphorylated active-site intermediate. This chain is Nucleoside diphosphate kinase, found in Nitrosomonas eutropha (strain DSM 101675 / C91 / Nm57).